Here is a 350-residue protein sequence, read N- to C-terminus: Protein pelota homolog (350 aa).

It belongs to the eukaryotic release factor 1 family. Pelota subfamily. Monomer. The cofactor is a divalent metal cation.

Its subcellular location is the cytoplasm. In terms of biological role, may function in recognizing stalled ribosomes, interact with stem-loop structures in stalled mRNA molecules, and effect endonucleolytic cleavage of the mRNA. May play a role in the release non-functional ribosomes and degradation of damaged mRNAs. Has endoribonuclease activity. This is Protein pelota homolog from Methanosarcina barkeri (strain Fusaro / DSM 804).